We begin with the raw amino-acid sequence, 400 residues long: Elongation factor Tu-B (400 aa).

A tr-type G domain is found at 10–209; sequence KPHVNVGTIG…VVDEYIPTPE (200 aa). The tract at residues 19-26 is G1; that stretch reads GHVDHGKT. GTP is bound at residue 19–26; sequence GHVDHGKT. Thr26 lines the Mg(2+) pocket. Residues 60–64 form a G2 region; that stretch reads GITIN. Residues 81-84 form a G3 region; that stretch reads DCPG. GTP is bound by residues 81 to 85 and 136 to 139; these read DCPGH and NKAD. A G4 region spans residues 136–139; the sequence is NKAD. The segment at 174–176 is G5; that stretch reads SAL.

It belongs to the TRAFAC class translation factor GTPase superfamily. Classic translation factor GTPase family. EF-Tu/EF-1A subfamily. As to quaternary structure, monomer.

It is found in the cytoplasm. It carries out the reaction GTP + H2O = GDP + phosphate + H(+). GTP hydrolase that promotes the GTP-dependent binding of aminoacyl-tRNA to the A-site of ribosomes during protein biosynthesis. The protein is Elongation factor Tu-B of Caldanaerobacter subterraneus subsp. tengcongensis (strain DSM 15242 / JCM 11007 / NBRC 100824 / MB4) (Thermoanaerobacter tengcongensis).